The chain runs to 697 residues: tRNA 5-methylaminomethyl-2-thiouridine biosynthesis bifunctional protein MnmC (697 aa).

A tRNA (mnm(5)s(2)U34)-methyltransferase region spans residues 1–269 (MNKTPLLSVS…LRQQLQQQFA (269 aa)). Residues 287-697 (IGGGIASASL…RKLLKGKALM (411 aa)) are FAD-dependent cmnm(5)s(2)U34 oxidoreductase.

In the N-terminal section; belongs to the methyltransferase superfamily. tRNA (mnm(5)s(2)U34)-methyltransferase family. This sequence in the C-terminal section; belongs to the DAO family. FAD serves as cofactor.

It localises to the cytoplasm. The enzyme catalyses 5-aminomethyl-2-thiouridine(34) in tRNA + S-adenosyl-L-methionine = 5-methylaminomethyl-2-thiouridine(34) in tRNA + S-adenosyl-L-homocysteine + H(+). Functionally, catalyzes the last two steps in the biosynthesis of 5-methylaminomethyl-2-thiouridine (mnm(5)s(2)U) at the wobble position (U34) in tRNA. Catalyzes the FAD-dependent demodification of cmnm(5)s(2)U34 to nm(5)s(2)U34, followed by the transfer of a methyl group from S-adenosyl-L-methionine to nm(5)s(2)U34, to form mnm(5)s(2)U34. This chain is tRNA 5-methylaminomethyl-2-thiouridine biosynthesis bifunctional protein MnmC, found in Shewanella frigidimarina (strain NCIMB 400).